Here is a 232-residue protein sequence, read N- to C-terminus: 2,3,4,5-tetrahydropyridine-2,6-dicarboxylate N-acetyltransferase (232 aa).

The protein belongs to the transferase hexapeptide repeat family. DapH subfamily.

The catalysed reaction is (S)-2,3,4,5-tetrahydrodipicolinate + acetyl-CoA + H2O = L-2-acetamido-6-oxoheptanedioate + CoA. The protein operates within amino-acid biosynthesis; L-lysine biosynthesis via DAP pathway; LL-2,6-diaminopimelate from (S)-tetrahydrodipicolinate (acetylase route): step 1/3. Functionally, catalyzes the transfer of an acetyl group from acetyl-CoA to tetrahydrodipicolinate. In Streptococcus uberis (strain ATCC BAA-854 / 0140J), this protein is 2,3,4,5-tetrahydropyridine-2,6-dicarboxylate N-acetyltransferase.